Here is a 257-residue protein sequence, read N- to C-terminus: MAALNEFVSVVVSDGSRDAGLAMLLVSRPPTNALSRQVYREVIAAADELGRRDDVAAVILFGGHEIFSAGDDMPELRTLRGAEAETAARVRRDAIDAVAAIPKPTVAAITGYALGAGLTLALAADWRISGDNVKFGATEILAGLVPGGDALARLTRVAGASKAKELVFSGRFFDAEEALALGLIDEMVAPDDVYDAAAAWARRFLDGPRHALAAAKAGVDAVFELPRAERLAAGQRRYVEVFSAGQGGDAGADPHGG.

It belongs to the enoyl-CoA hydratase/isomerase family.

It carries out the reaction a (3S)-3-hydroxyacyl-CoA = a (2E)-enoyl-CoA + H2O. It catalyses the reaction a 4-saturated-(3S)-3-hydroxyacyl-CoA = a (3E)-enoyl-CoA + H2O. In terms of biological role, could possibly oxidize fatty acids using specific components. This is Probable enoyl-CoA hydratase echA17 (echA17) from Mycobacterium avium (strain 104).